The sequence spans 511 residues: ATP synthase subunit alpha (511 aa).

Gly169–Thr176 provides a ligand contact to ATP.

It belongs to the ATPase alpha/beta chains family. As to quaternary structure, F-type ATPases have 2 components, CF(1) - the catalytic core - and CF(0) - the membrane proton channel. CF(1) has five subunits: alpha(3), beta(3), gamma(1), delta(1), epsilon(1). CF(0) has three main subunits: a(1), b(2) and c(9-12). The alpha and beta chains form an alternating ring which encloses part of the gamma chain. CF(1) is attached to CF(0) by a central stalk formed by the gamma and epsilon chains, while a peripheral stalk is formed by the delta and b chains.

The protein resides in the cell membrane. It carries out the reaction ATP + H2O + 4 H(+)(in) = ADP + phosphate + 5 H(+)(out). Produces ATP from ADP in the presence of a proton gradient across the membrane. The alpha chain is a regulatory subunit. This chain is ATP synthase subunit alpha, found in Latilactobacillus sakei subsp. sakei (strain 23K) (Lactobacillus sakei subsp. sakei).